A 636-amino-acid chain; its full sequence is Threonine--tRNA ligase (636 aa).

A TGS domain is found at 1-61; sequence MINITLPDDS…RNDCAVRLIT (61 aa). A catalytic region spans residues 238–528; sequence DHRKIGTRMG…LVEHFAGKFP (291 aa). The Zn(2+) site is built by Cys-329, His-380, and His-505.

The protein belongs to the class-II aminoacyl-tRNA synthetase family. As to quaternary structure, homodimer. Requires Zn(2+) as cofactor.

The protein resides in the cytoplasm. It carries out the reaction tRNA(Thr) + L-threonine + ATP = L-threonyl-tRNA(Thr) + AMP + diphosphate + H(+). Functionally, catalyzes the attachment of threonine to tRNA(Thr) in a two-step reaction: L-threonine is first activated by ATP to form Thr-AMP and then transferred to the acceptor end of tRNA(Thr). Also edits incorrectly charged L-seryl-tRNA(Thr). In Desulforapulum autotrophicum (strain ATCC 43914 / DSM 3382 / VKM B-1955 / HRM2) (Desulfobacterium autotrophicum), this protein is Threonine--tRNA ligase.